Consider the following 352-residue polypeptide: Histidinol-phosphate aminotransferase (352 aa).

An N6-(pyridoxal phosphate)lysine modification is found at K221.

It belongs to the class-II pyridoxal-phosphate-dependent aminotransferase family. Histidinol-phosphate aminotransferase subfamily. As to quaternary structure, homodimer. Pyridoxal 5'-phosphate serves as cofactor.

The catalysed reaction is L-histidinol phosphate + 2-oxoglutarate = 3-(imidazol-4-yl)-2-oxopropyl phosphate + L-glutamate. The protein operates within amino-acid biosynthesis; L-histidine biosynthesis; L-histidine from 5-phospho-alpha-D-ribose 1-diphosphate: step 7/9. The polypeptide is Histidinol-phosphate aminotransferase (Staphylococcus aureus (strain Mu3 / ATCC 700698)).